The primary structure comprises 493 residues: Glutamate--tRNA ligase (493 aa).

A 'HIGH' region motif is present at residues 10-20 (PSPTGDPHVGT). Zn(2+) is bound by residues Cys-107, Cys-109, Cys-134, and His-136. Residues 251–255 (KLSKR) carry the 'KMSKS' region motif. Lys-254 contacts ATP.

It belongs to the class-I aminoacyl-tRNA synthetase family. Glutamate--tRNA ligase type 1 subfamily. As to quaternary structure, monomer. Requires Zn(2+) as cofactor.

It is found in the cytoplasm. It catalyses the reaction tRNA(Glu) + L-glutamate + ATP = L-glutamyl-tRNA(Glu) + AMP + diphosphate. Functionally, catalyzes the attachment of glutamate to tRNA(Glu) in a two-step reaction: glutamate is first activated by ATP to form Glu-AMP and then transferred to the acceptor end of tRNA(Glu). The sequence is that of Glutamate--tRNA ligase from Ectopseudomonas mendocina (strain ymp) (Pseudomonas mendocina).